The following is a 483-amino-acid chain: Glutamate--tRNA ligase (483 aa).

The 'HIGH' region motif lies at 11 to 21 (PSPTGLLHIGN). The short motif at 255–259 (KLSKR) is the 'KMSKS' region element. Residue lysine 258 coordinates ATP.

This sequence belongs to the class-I aminoacyl-tRNA synthetase family. Glutamate--tRNA ligase type 1 subfamily. Monomer.

It is found in the cytoplasm. It carries out the reaction tRNA(Glu) + L-glutamate + ATP = L-glutamyl-tRNA(Glu) + AMP + diphosphate. In terms of biological role, catalyzes the attachment of glutamate to tRNA(Glu) in a two-step reaction: glutamate is first activated by ATP to form Glu-AMP and then transferred to the acceptor end of tRNA(Glu). This chain is Glutamate--tRNA ligase, found in Lactococcus lactis subsp. lactis (strain IL1403) (Streptococcus lactis).